The primary structure comprises 370 residues: Aminomethyltransferase (370 aa).

The protein belongs to the GcvT family. As to quaternary structure, the glycine cleavage system is composed of four proteins: P, T, L and H.

The enzyme catalyses N(6)-[(R)-S(8)-aminomethyldihydrolipoyl]-L-lysyl-[protein] + (6S)-5,6,7,8-tetrahydrofolate = N(6)-[(R)-dihydrolipoyl]-L-lysyl-[protein] + (6R)-5,10-methylene-5,6,7,8-tetrahydrofolate + NH4(+). In terms of biological role, the glycine cleavage system catalyzes the degradation of glycine. In Clostridium botulinum (strain 657 / Type Ba4), this protein is Aminomethyltransferase.